A 237-amino-acid polypeptide reads, in one-letter code: Uracil-DNA glycosylase (237 aa).

Catalysis depends on Asp-77, which acts as the Proton acceptor.

It belongs to the uracil-DNA glycosylase (UDG) superfamily. UNG family.

It is found in the cytoplasm. It catalyses the reaction Hydrolyzes single-stranded DNA or mismatched double-stranded DNA and polynucleotides, releasing free uracil.. Excises uracil residues from the DNA which can arise as a result of misincorporation of dUMP residues by DNA polymerase or due to deamination of cytosine. The polypeptide is Uracil-DNA glycosylase (Acinetobacter baumannii (strain ACICU)).